Consider the following 395-residue polypeptide: Cyclic AMP-responsive element-binding protein 3-like protein 4 (395 aa).

The Cytoplasmic segment spans residues M1–S295. The interval E82–S108 is disordered. Residues V217–L280 form the bZIP domain. A basic motif region spans residues K219–R248. Positions L259–L280 are leucine-zipper. A helical; Signal-anchor for type II membrane protein transmembrane segment spans residues T296 to F316. The Lumenal portion of the chain corresponds to Q317 to M395. A disordered region spans residues R355–M395. N-linked (GlcNAc...) asparagine glycosylation is present at N366.

Belongs to the bZIP family. ATF subfamily. As to quaternary structure, binds DNA as a dimer. Post-translationally, N-glycosylated in the C-terminal region. Controlled by regulated intramembrane proteolysis (RIP). Following ER stress a fragment containing the cytoplasmic transcription factor domain is released by proteolysis. The cleavage seems to be performed sequentially by site-1 and site-2 proteases (PS1 and PS2). PS1 cleavage may be suppressed by a determinant in the C-terminal region. As to expression, according to PubMed:11830526, exclusively expressed in the prostate. Expressed in breast and prostate cancer cell lines. Expressed in prostatic luminal epithelial cells (at protein level). Expression is significantly more abundant in prostate cancer than in benign prostatic tissue (prostatic hyperplasia). According to PubMed:12111373, also expressed in brain, pancreas and skeletal muscle, and at lower levels in small intestine, testis, leukocyte and thymus.

It localises to the endoplasmic reticulum membrane. Its subcellular location is the golgi apparatus membrane. The protein resides in the nucleus. Transcriptional activator that may play a role in the unfolded protein response. Binds to the UPR element (UPRE) but not to CRE element. Preferentially binds DNA with to the consensus sequence 5'-T[GT]ACGT[GA][GT]-3' and has transcriptional activation activity from UPRE. Binds to NF-kappa-B site and has transcriptional activation activity from NF-kappa-B-containing regulatory elements. The sequence is that of Cyclic AMP-responsive element-binding protein 3-like protein 4 (CREB3L4) from Homo sapiens (Human).